A 477-amino-acid chain; its full sequence is MGRTVVVLGGGISGLAASYHLSRAPCPPKVVLVESSERLGGWIRSVRGPNGAIFELGPRGIRPAGALGARTLLLVSELGLDSEVLPVRGDHPAAQNRFLYVGGALHALPTGLRGLLRPSPPFSKPLFWAGLRELTKPRGKEPDETVHSFAQRRLGPEVASLAMDSLCRGVFAGNSRELSIRSCFPSLFQAEQTHRSILLGLLLGAGRTPQPDSALIRQALAERWSQWSLRGGLEMLPQALETHLTSRGVSVLRGQPVCGLSLQAEGRWKVSLRDSSLEADHVISAIPASVLSELLPAEAAPLARALSAITAVSVAVVNLQYQGAHLPVQGFGHLVPSSEDPGVLGIVYDSVAFPEQDGSPPGLRVTVMLGGSWLQTLEASGCVLSQELFQQRAQEAAATQLGLKEMPSHCLVHLHKNCIPQYTLGHWQKLESARQFLTAHRLPLTLAGASYEGVAVNDCIESGRQAAVSVLGTEPNS.

FAD-binding positions include 9-14 (GGGISG), 34-35 (ES), W42, 57-60 (GPRG), V257, A449, and 454-456 (VAV).

It belongs to the protoporphyrinogen/coproporphyrinogen oxidase family. Protoporphyrinogen oxidase subfamily. In terms of assembly, monomer. Homodimer. FAD serves as cofactor. As to expression, expressed in heart, brain, placenta, lung, liver, skeletal muscle, kidney and pancreas.

Its subcellular location is the mitochondrion inner membrane. It catalyses the reaction protoporphyrinogen IX + 3 O2 = protoporphyrin IX + 3 H2O2. It functions in the pathway porphyrin-containing compound metabolism; protoporphyrin-IX biosynthesis; protoporphyrin-IX from protoporphyrinogen-IX: step 1/1. Its function is as follows. Catalyzes the 6-electron oxidation of protoporphyrinogen-IX to form protoporphyrin-IX. The polypeptide is Protoporphyrinogen oxidase (PPOX) (Homo sapiens (Human)).